The following is a 5154-amino-acid chain: Hydrocephalus-inducing protein (5154 aa).

Residues 409–800 (MILEDSVLDP…VLLSSPSPCG (392 aa)) form an interaction with KIF9 region. Basic and acidic residues predominate over residues 997-1009 (RPKEKQSKKEPGK). Disordered stretches follow at residues 997-1033 (RPKE…GNPV), 1966-1988 (ENEE…TSIS), 2193-2222 (ADSH…SPLL), 2383-2423 (KLQQ…QGAT), 2521-2572 (HTGT…KAER), and 2706-2762 (KAQE…DIDQ). Positions 1010–1024 (KGSTSSSRRQSKASQ) are enriched in low complexity. Residues 1948 to 1977 (EMKKSKEEHMKAKYMENLENEEEEMNTSDQ) adopt a coiled-coil conformation. Polar residues-rich tracts occupy residues 1974–1988 (TSDQ…TSIS) and 2209–2220 (SETPQVQISSSP). The stretch at 2308 to 2444 (YVVMKAQEKA…LKMESIERKV (137 aa)) forms a coiled coil. Basic and acidic residues-rich tracts occupy residues 2383–2398 (KLQQ…DELK), 2523–2535 (GTDE…DDQR), 2548–2572 (KDRE…KAER), and 2721–2734 (KLKD…ETQK). Positions 2543 to 2588 (GRKGRKDRERERLEKERAEKERLEREKAERERLEKLKALEERSDVE) form a coiled coil.

As to quaternary structure, interacts with KIF9. In terms of tissue distribution, expressed in brain and testis. Expressed in ciliated epithelial cells lining bronchi and oviduct, and in spermatocytes.

It localises to the cell projection. It is found in the cilium. Its subcellular location is the cytoplasm. The protein localises to the cytoskeleton. The protein resides in the cilium axoneme. It localises to the flagellum. Its function is as follows. Required for ciliary motility. The sequence is that of Hydrocephalus-inducing protein (Hydin) from Mus musculus (Mouse).